Reading from the N-terminus, the 94-residue chain is Neutrophil defensin 6 (94 aa).

An N-terminal signal peptide occupies residues 1-19 (MRTIAILAAILLFALLAQA). Positions 20–61 (KSLQETADEAATQEQPGEDDQDLAVSFEENGLSTLRASGSQA) are excised as a propeptide. Cystine bridges form between Cys65–Cys93, Cys67–Cys82, and Cys72–Cys92.

It belongs to the alpha-defensin family.

Its subcellular location is the secreted. Its function is as follows. Defensins 6 and 7 have bacteriostatic activity against Gram-positive bacteria S.aureus and L.monocytogenes and Gram-negative bacterium E.coli and antifungal activity against C.neoformans. Defensin 7 has microbicidial activity against Gram-positive bacteria S.aureus and L.monocytogenes. This chain is Neutrophil defensin 6, found in Macaca mulatta (Rhesus macaque).